A 371-amino-acid polypeptide reads, in one-letter code: 4-hydroxybenzoate polyprenyltransferase, mitochondrial (371 aa).

The transit peptide at 1 to 34 directs the protein to the mitochondrion; sequence MLGSRAAGFARGLRAVALAWLPGWRGRSFALARA. At 35-83 the chain is on the mitochondrial matrix side; the sequence is AGAPHGGDLQPPACPEPRGRQLSLSAAAVVDSAPRPLQPYLRLMRLDKP. A helical transmembrane segment spans residues 84-104; sequence IGTWLLYLPCTWSIGLAAEPG. Residues 105–108 lie on the Mitochondrial intermembrane side of the membrane; it reads CFPD. Residues 109 to 129 traverse the membrane as a helical segment; sequence WYMLSLFGTGAILMRGAGCTI. The Mitochondrial matrix portion of the chain corresponds to 130-148; that stretch reads NDMWDQDYDKKVTRTANRP. Residues 149-169 traverse the membrane as a helical segment; it reads IAAGDISTFQSFVFLGGQLTL. The Mitochondrial intermembrane portion of the chain corresponds to 170–172; sequence ALG. The helical transmembrane segment at 173 to 193 threads the bilayer; sequence VLLCLNYYSIALGAGSLLLVI. At 194–203 the chain is on the mitochondrial matrix side; sequence TYPLMKRISY. Residues 204–224 traverse the membrane as a helical segment; sequence WPQLALGLTFNWGALLGWSAI. At 225–231 the chain is on the mitochondrial intermembrane side; the sequence is KGSCDPS. A helical membrane pass occupies residues 232-252; sequence VCLPLYFSGVMWTLIYDTIYA. Residues 253–277 lie on the Mitochondrial matrix side of the membrane; that stretch reads HQDKRDDVLIGLKSTALRFGENTKP. The chain crosses the membrane as a helical span at residues 278-298; sequence WLSGFSVAMLGALSLVGVNSG. At 299–300 the chain is on the mitochondrial intermembrane side; sequence QT. Residues 301-321 traverse the membrane as a helical segment; that stretch reads APYYAALGAVGAHLTHQIYTL. Residues 322 to 332 lie on the Mitochondrial matrix side of the membrane; the sequence is DIHRPEDCWNK. The helical transmembrane segment at 333-353 threads the bilayer; sequence FISNRTLGLIVFLGIVLGNLW. Over 354–371 the chain is Mitochondrial intermembrane; sequence KEKKTDKTKKGIENKIEN.

It belongs to the UbiA prenyltransferase family. The cofactor is Mg(2+). As to expression, widely expressed. Present in all of the tissues tested. Expressed at higher level in skeletal muscle, adrenal glands and the heart.

Its subcellular location is the mitochondrion inner membrane. It catalyses the reaction an all-trans-polyprenyl diphosphate + 4-hydroxybenzoate = a 4-hydroxy-3-(all-trans-polyprenyl)benzoate + diphosphate. The enzyme catalyses all-trans-decaprenyl diphosphate + 4-hydroxybenzoate = 4-hydroxy-3-(all-trans-decaprenyl)benzoate + diphosphate. It carries out the reaction all-trans-nonaprenyl diphosphate + 4-hydroxybenzoate = 4-hydroxy-3-(all-trans-nonaprenyl)benzoate + diphosphate. It participates in cofactor biosynthesis; ubiquinone biosynthesis. Mediates the second step in the final reaction sequence of coenzyme Q (CoQ) biosynthesis. Catalyzes the prenylation of para-hydroxybenzoate (PHB) with an all-trans polyprenyl donor (such as all-trans-decaprenyl diphosphate). The length of the polyprenyl side chain varies depending on the species, in humans, the side chain is comprised of 10 isoprenyls (decaprenyl) producing CoQ10 (also known as ubiquinone), whereas rodents predominantly generate CoQ9. However, this specificity is not complete, human tissues have low amounts of CoQ9 and rodent organs contain some CoQ10. Plays a central role in the biosynthesis of CoQ10. CoQ10 is a vital molecule that transports electrons from mitochondrial respiratory chain complexes. CoQs also function as cofactors for uncoupling protein and play a role as regulators of the extracellularly-induced ceramide-dependent apoptotic pathway. Regulates mitochondrial permeability transition pore (mPTP) opening and ROS production (pivotal events in cell death) in a tissue specific manner. The sequence is that of 4-hydroxybenzoate polyprenyltransferase, mitochondrial from Homo sapiens (Human).